The following is a 367-amino-acid chain: MAVYHLLLSSPPSLLLLPPSPRRPNLTLIRRIPAHPRLGNSTSLLSSSSPVIRKILVRSTLREDQPIASDSESSPTLLIGEDSAAFELGKQKLVSWVYFGVVLGVVLFILNVVWIDNSTGFGKSFIDAVSNISGSPEVAMLMLILIFAIVHSGLASLRDIGEKLIGERAFRVLFAGISLPLAMSTIVYFINHRYDGSQLWQLQGVPGVHEAIWVANFVSFFFLYPSTFNLLEVAAVDKPKMHLWETGIMRITRHPQMVGQIVWCLAHTLWIGNTVAASASLGLIAHHLFGAWNGDRRLAKRYGEDFESIKKRTSVIPFAAIFEGRQVLPEDYYKEFVRLPYLAITALTVGAYFAHPLMQGASFRLHW.

The N-terminal 58 residues, 1-58, are a transit peptide targeting the chloroplast; sequence MAVYHLLLSSPPSLLLLPPSPRRPNLTLIRRIPAHPRLGNSTSLLSSSSPVIRKILVR. 6 consecutive transmembrane segments (helical) span residues 95–115, 137–157, 172–192, 211–231, 269–289, and 339–359; these read SWVYFGVVLGVVLFILNVVWI, EVAMLMLILIFAIVHSGLASL, VLFAGISLPLAMSTIVYFINH, AIWVANFVSFFFLYPSTFNLL, LWIGNTVAASASLGLIAHHLF, and LPYLAITALTVGAYFAHPLMQ.

Expressed in leaves and at lower levels in roots.

The protein resides in the plastid. It localises to the chloroplast membrane. It catalyses the reaction 9,9',15-tri-cis-zeta-carotene = 9,9'-di-cis-zeta-carotene. In terms of biological role, isomerase involved in the biosynthesis of carotenoids. Catalyzes the cis- to trans-conversion of the 15-cis-bond in 9,15,9'-tri-cis-zeta-carotene. The chain is 15-cis-zeta-carotene isomerase, chloroplastic (Z-ISO) from Arabidopsis thaliana (Mouse-ear cress).